The primary structure comprises 141 residues: Large ribosomal subunit protein uL16 (141 aa).

Positions 1–20 (MLMPKRTKYRKQMKGRNRGK) are disordered.

The protein belongs to the universal ribosomal protein uL16 family. As to quaternary structure, part of the 50S ribosomal subunit.

Its function is as follows. Binds 23S rRNA and is also seen to make contacts with the A and possibly P site tRNAs. The polypeptide is Large ribosomal subunit protein uL16 (Helicobacter hepaticus (strain ATCC 51449 / 3B1)).